Reading from the N-terminus, the 169-residue chain is Ferric-chelate reductase (NAD(P)H) (169 aa).

Residue Y7 participates in NADP(+) binding. Residues 27–31 (QIANT), 45–52 (CLNKENDT), 82–84 (RKS), and K89 each bind FMN. NADP(+) is bound by residues H126 and 147 to 154 (YADYHLMK).

Belongs to the non-flavoprotein flavin reductase family. Homodimer. It depends on FMN as a cofactor. FAD serves as cofactor.

It catalyses the reaction 2 a Fe(II)-siderophore + NAD(+) + H(+) = 2 a Fe(III)-siderophore + NADH. It carries out the reaction 2 a Fe(II)-siderophore + NADP(+) + H(+) = 2 a Fe(III)-siderophore + NADPH. Functionally, catalyzes the reduction of bound ferric iron (Fe(3+)) in a variety of iron chelators (siderophores) using NAD(P)H as the electron donor, resulting in the release of Fe(2+). Not active with uncomplexed Fe(3+). Also reduces FMN and FAD, but not riboflavin. The polypeptide is Ferric-chelate reductase (NAD(P)H) (Archaeoglobus fulgidus (strain ATCC 49558 / DSM 4304 / JCM 9628 / NBRC 100126 / VC-16)).